We begin with the raw amino-acid sequence, 288 residues long: tRNA pseudouridine synthase A (288 aa).

Catalysis depends on aspartate 58, which acts as the Nucleophile. Tyrosine 124 contributes to the substrate binding site.

Belongs to the tRNA pseudouridine synthase TruA family. As to quaternary structure, homodimer.

It carries out the reaction uridine(38/39/40) in tRNA = pseudouridine(38/39/40) in tRNA. Formation of pseudouridine at positions 38, 39 and 40 in the anticodon stem and loop of transfer RNAs. The chain is tRNA pseudouridine synthase A from Corynebacterium diphtheriae (strain ATCC 700971 / NCTC 13129 / Biotype gravis).